The following is a 247-amino-acid chain: DNA repair protein RecO (247 aa).

It belongs to the RecO family.

Its function is as follows. Involved in DNA repair and RecF pathway recombination. The chain is DNA repair protein RecO from Caldanaerobacter subterraneus subsp. tengcongensis (strain DSM 15242 / JCM 11007 / NBRC 100824 / MB4) (Thermoanaerobacter tengcongensis).